We begin with the raw amino-acid sequence, 480 residues long: Probable cytosol aminopeptidase (480 aa).

The Mn(2+) site is built by Lys248 and Asp253. Lys260 is a catalytic residue. Asp271, Asp330, and Glu332 together coordinate Mn(2+). Arg334 is a catalytic residue.

This sequence belongs to the peptidase M17 family. Mn(2+) is required as a cofactor.

The protein localises to the cytoplasm. The enzyme catalyses Release of an N-terminal amino acid, Xaa-|-Yaa-, in which Xaa is preferably Leu, but may be other amino acids including Pro although not Arg or Lys, and Yaa may be Pro. Amino acid amides and methyl esters are also readily hydrolyzed, but rates on arylamides are exceedingly low.. The catalysed reaction is Release of an N-terminal amino acid, preferentially leucine, but not glutamic or aspartic acids.. Functionally, presumably involved in the processing and regular turnover of intracellular proteins. Catalyzes the removal of unsubstituted N-terminal amino acids from various peptides. The chain is Probable cytosol aminopeptidase from Solibacter usitatus (strain Ellin6076).